Here is a 441-residue protein sequence, read N- to C-terminus: Cytochrome c biogenesis protein Ccs1 (441 aa).

A run of 3 helical transmembrane segments spans residues 19–39 (LKLA…GTVI), 78–98 (TWWF…CTLA), and 164–184 (IGPI…LLGN).

The protein belongs to the Ccs1/CcsB family. As to quaternary structure, may interact with CcsA.

Its subcellular location is the plastid. It localises to the chloroplast thylakoid membrane. Its function is as follows. Required during biogenesis of c-type cytochromes (cytochrome c6 and cytochrome f) at the step of heme attachment. The protein is Cytochrome c biogenesis protein Ccs1 of Rhodomonas salina (Cryptomonas salina).